The following is a 342-amino-acid chain: Galactose mutarotase (342 aa).

At Ala-2 the chain carries N-acetylalanine. Phosphoserine is present on Ser-14. Beta-D-galactose contacts are provided by residues Asn-81–Arg-82 and His-107. A Phosphoserine modification is found at Ser-124. His-176 functions as the Proton donor in the catalytic mechanism. Beta-D-galactose contacts are provided by residues His-176–Tyr-178, Asp-243, Gln-279, and Glu-307. Glu-307 acts as the Proton acceptor in catalysis.

This sequence belongs to the aldose epimerase family. In terms of assembly, monomer.

The protein localises to the cytoplasm. It catalyses the reaction alpha-D-galactose = beta-D-galactose. The enzyme catalyses alpha-D-glucose = beta-D-glucose. It participates in carbohydrate metabolism; hexose metabolism. The protein operates within carbohydrate metabolism; galactose metabolism. In terms of biological role, mutarotase that catalyzes the interconversion of beta-D-galactose and alpha-D-galactose during galactose metabolism. Beta-D-galactose is metabolized in the liver into glucose 1-phosphate, the primary metabolic fuel, by the action of four enzymes that constitute the Leloir pathway: GALM, GALK1 (galactokinase), GALT (galactose-1-phosphate uridylyltransferase) and GALE (UDP-galactose-4'-epimerase). Involved in the maintenance of the equilibrium between the beta- and alpha-anomers of galactose, therefore ensuring a sufficient supply of the alpha-anomer for GALK1. Also active on D-glucose although shows a preference for galactose over glucose. In Homo sapiens (Human), this protein is Galactose mutarotase.